Here is a 166-residue protein sequence, read N- to C-terminus: Mitochondrial fission process protein 1 (166 aa).

2 helical membrane passes run 34-54 (SLVP…YVLA) and 80-100 (AVVD…GFTI). K123 is modified (N6-succinyllysine). Residues 129–149 (LGLLTIPIIIHPIDRSVDFLL) form a helical membrane-spanning segment.

This sequence belongs to the MTFP1 family.

It localises to the mitochondrion inner membrane. Involved in the mitochondrial division probably by regulating membrane fission. Loss-of-function induces the release of cytochrome c, which activates the caspase cascade and leads to apoptosis. The protein is Mitochondrial fission process protein 1 (MTFP1) of Homo sapiens (Human).